The primary structure comprises 201 residues: Protease (201 aa).

Catalysis depends on residues His56, Asp73, and Cys121.

The protein belongs to the peptidase C5 family. As to quaternary structure, interacts with protease cofactor pVI-C; this interaction is necessary for protease activation.

The protein resides in the virion. The protein localises to the host nucleus. The enzyme catalyses Cleaves proteins of the adenovirus and its host cell at two consensus sites: -Yaa-Xaa-Gly-Gly-|-Xaa- and -Yaa-Xaa-Gly-Xaa-|-Gly- (in which Yaa is Met, Ile or Leu, and Xaa is any amino acid).. With respect to regulation, requires DNA and protease cofactor for maximal activation. Inside nascent virions, becomes partially activated by binding to the viral DNA, allowing it to cleave the cofactor that binds to the protease and fully activates it. Actin, like the viral protease cofactor, seems to act as a cofactor in the cleavage of cytokeratin 18 and of actin itself. In terms of biological role, cleaves viral precursor proteins (pTP, pIIIa, pVI, pVII, pVIII, and pX) inside newly assembled particles giving rise to mature virions. Protease complexed to its cofactor slides along the viral DNA to specifically locate and cleave the viral precursors. Mature virions have a weakened organization compared to the unmature virions, thereby facilitating subsequent uncoating. Without maturation, the particle lacks infectivity and is unable to uncoat. Late in adenovirus infection, in the cytoplasm, may participate in the cytoskeleton destruction. Cleaves host cell cytoskeletal keratins K7 and K18. The protein is Protease of Homo sapiens (Human).